Reading from the N-terminus, the 313-residue chain is Fructose-1,6-bisphosphatase class 1 (313 aa).

4 residues coordinate Mg(2+): E91, D112, L114, and D115. Substrate contacts are provided by residues 115–118, Y223, and K254; that span reads DGSS. E260 lines the Mg(2+) pocket.

This sequence belongs to the FBPase class 1 family. Homotetramer. Mg(2+) is required as a cofactor.

It is found in the cytoplasm. It catalyses the reaction beta-D-fructose 1,6-bisphosphate + H2O = beta-D-fructose 6-phosphate + phosphate. It functions in the pathway carbohydrate biosynthesis; gluconeogenesis. In Geobacter sulfurreducens (strain ATCC 51573 / DSM 12127 / PCA), this protein is Fructose-1,6-bisphosphatase class 1.